Here is a 75-residue protein sequence, read N- to C-terminus: uncharacterized protein (75 aa).

4Fe-4S ferredoxin-type domains lie at 2-30 and 37-68; these read SHTI…KGEG and DWYW…KEEP. 2 residues coordinate [3Fe-4S] cluster: C10 and C16. C20, C46, C49, and C52 together coordinate [4Fe-4S] cluster. A [3Fe-4S] cluster-binding site is contributed by C56.

[4Fe-4S] cluster is required as a cofactor. It depends on [3Fe-4S] cluster as a cofactor.

The protein localises to the plastid. It localises to the chloroplast. This is an uncharacterized protein from Porphyra purpurea (Red seaweed).